A 329-amino-acid chain; its full sequence is Prostaglandin reductase 1 (329 aa).

Phosphothreonine is present on T18. At S20 the chain carries Phosphoserine. Residues G152 to G155, K178, Y193, N217, C239 to Y245, F270 to V272, and N321 contribute to the NADP(+) site. Position 178 is an N6-(2-hydroxyisobutyryl)lysine; alternate (K178). Residue K178 is modified to N6-acetyllysine; alternate.

This sequence belongs to the NADP-dependent oxidoreductase L4BD family. In terms of assembly, monomer or homodimer.

The protein resides in the cytoplasm. It catalyses the reaction 13,14-dihydro-15-oxo-prostaglandin E1 + NADP(+) = 15-oxoprostaglandin E1 + NADPH + H(+). The enzyme catalyses 13,14-dihydro-15-oxo-prostaglandin E2 + NADP(+) = 15-oxoprostaglandin E2 + NADPH + H(+). The catalysed reaction is 13,14-dihydro-15-oxo-prostaglandin F1alpha + NADP(+) = 15-oxoprostaglandin F1alpha + NADPH + H(+). It carries out the reaction 13,14-dihydro-15-oxo-PGF2alpha + NADP(+) = 15-oxoprostaglandin F2alpha + NADPH + H(+). It catalyses the reaction leukotriene B4 + NADP(+) = 12-oxo-leukotriene B4 + NADPH + H(+). The enzyme catalyses 20-hydroxy-leukotriene B4 + NADP(+) = 12-oxo-20-hydroxy-leukotriene B4 + NADPH + H(+). The catalysed reaction is 6-trans-leukotriene B4 + NADP(+) = 12-oxo-(5S)-hydroxy-(6E,8E,10E,14Z)-eicosatetraenoate + NADPH + H(+). It carries out the reaction (5S,12S)-dihydroxy-(6E,10E,12E,14Z)-eicosatetraenoate + NADP(+) = 12-oxo-(5S)-hydroxy-(6E,8E,10E,14Z)-eicosatetraenoate + NADPH + H(+). It catalyses the reaction an n-alkanal + NADP(+) = an alk-2-enal + NADPH + H(+). The enzyme catalyses hexanal + NADP(+) = (E)-hex-2-enal + NADPH + H(+). The catalysed reaction is octanal + NADP(+) = (2E)-octenal + NADPH + H(+). It carries out the reaction decanal + NADP(+) = (2E)-decenal + NADPH + H(+). It catalyses the reaction dodecanal + NADP(+) = (2E)-dodecenal + NADPH + H(+). The enzyme catalyses 4-hydroxynonanal + NADP(+) = (E)-4-hydroxynon-2-enal + NADPH + H(+). The catalysed reaction is pentan-2-one + NADP(+) = (E)-pent-3-en-2-one + NADPH + H(+). It carries out the reaction nonan-2-one + NADP(+) = (3E)-nonen-2-one + NADPH + H(+). Its function is as follows. NAD(P)H-dependent oxidoreductase involved in metabolic inactivation of pro- and anti-inflammatory eicosanoids: prostaglandins (PG), leukotrienes (LT) and lipoxins (LX). Catalyzes with high efficiency the reduction of the 13,14 double bond of 15-oxoPGs, including 15-oxo-PGE1, 15-oxo-PGE2, 15-oxo-PGF1-alpha and 15-oxo-PGF2-alpha. Catalyzes with lower efficiency the oxidation of the hydroxyl group at C12 of LTB4 and its derivatives, converting them into biologically less active 12-oxo-LTB4 metabolites. Reduces 15-oxo-LXA4 to 13,14 dihydro-15-oxo-LXA4, enhancing neutrophil recruitment at the inflammatory site. Plays a role in metabolic detoxification of alkenals and ketones. Reduces alpha,beta-unsaturated alkenals and ketones, particularly those with medium-chain length, showing highest affinity toward (2E)-decenal and (3E)-3-nonen-2-one. May inactivate 4-hydroxy-2-nonenal, a cytotoxic lipid constituent of oxidized low-density lipoprotein particles. The chain is Prostaglandin reductase 1 (PTGR1) from Bos taurus (Bovine).